The following is a 182-amino-acid chain: ATP synthase subunit delta (182 aa).

Belongs to the ATPase delta chain family. In terms of assembly, F-type ATPases have 2 components, F(1) - the catalytic core - and F(0) - the membrane proton channel. F(1) has five subunits: alpha(3), beta(3), gamma(1), delta(1), epsilon(1). CF(0) has four main subunits: a(1), b(1), b'(1) and c(10-14). The alpha and beta chains form an alternating ring which encloses part of the gamma chain. F(1) is attached to F(0) by a central stalk formed by the gamma and epsilon chains, while a peripheral stalk is formed by the delta, b and b' chains.

It localises to the cellular thylakoid membrane. F(1)F(0) ATP synthase produces ATP from ADP in the presence of a proton or sodium gradient. F-type ATPases consist of two structural domains, F(1) containing the extramembraneous catalytic core and F(0) containing the membrane proton channel, linked together by a central stalk and a peripheral stalk. During catalysis, ATP synthesis in the catalytic domain of F(1) is coupled via a rotary mechanism of the central stalk subunits to proton translocation. In terms of biological role, this protein is part of the stalk that links CF(0) to CF(1). It either transmits conformational changes from CF(0) to CF(1) or is implicated in proton conduction. This Synechococcus sp. (strain CC9902) protein is ATP synthase subunit delta.